Consider the following 212-residue polypeptide: Small ribosomal subunit protein eS1 (212 aa).

Belongs to the eukaryotic ribosomal protein eS1 family.

The sequence is that of Small ribosomal subunit protein eS1 from Ignicoccus hospitalis (strain KIN4/I / DSM 18386 / JCM 14125).